A 735-amino-acid chain; its full sequence is Ethylene receptor 1 (735 aa).

3 helical membrane passes run 23–43 (ISDF…IYFV), 54–74 (VLVQ…INLW), and 92–112 (VLTA…IPDL). Residues C65 and H69 each coordinate Cu cation. The 150-residue stretch at 158–307 (DRHTILKTTL…VVADQVAVAL (150 aa)) folds into the GAF domain. Residues 350–586 (VMNHEMRTPM…IFDVKLAISN (237 aa)) enclose the Histidine kinase domain. The residue at position 353 (H353) is a Phosphohistidine; by autocatalysis. Positions 609 to 726 (KVLVMDENGV…NMRNVLSDRL (118 aa)) constitute a Response regulatory domain. The residue at position 657 (D657) is a 4-aspartylphosphate. K711 is covalently cross-linked (Glycyl lysine isopeptide (Lys-Gly) (interchain with G-Cter in ubiquitin)).

The protein belongs to the ethylene receptor family. Homodimer; disulfide-linked. Cu cation serves as cofactor. Activation probably requires a transfer of a phosphate group between a His in the transmitter domain and an Asp of the receiver domain.

It localises to the endoplasmic reticulum membrane. It catalyses the reaction ATP + protein L-histidine = ADP + protein N-phospho-L-histidine.. May act early in the ethylene signal transduction pathway, possibly as an ethylene receptor, or as a regulator of the pathway. This is Ethylene receptor 1 (ETR1) from Brassica oleracea (Wild cabbage).